The following is a 463-amino-acid chain: Hexose-6-phosphate:phosphate antiporter (463 aa).

The Cytoplasmic portion of the chain corresponds to 1 to 24 (MLAFLNQVRKPTLDLPLEVRRKMW). A helical transmembrane segment spans residues 25–45 (FKPFMQSYLVVFIGYLTMYLI). The Periplasmic portion of the chain corresponds to 46–60 (RKNFNIAQNDMISTY). The helical transmembrane segment at 61-81 (GLSMTQLGMIGLGFSITYGVG) threads the bilayer. Residues 82-96 (KTLVSYYADGKNTKQ) lie on the Cytoplasmic side of the membrane. Residues 97–117 (FLPFMLILSAICMLGFSASMG) traverse the membrane as a helical segment. Over 118–120 (SGS) the chain is Periplasmic. A helical membrane pass occupies residues 121–141 (VSLFLMIAFYALSGFFQSTGG). Over 142–159 (SCSYSTITKWTPRRKRGT) the chain is Cytoplasmic. The chain crosses the membrane as a helical span at residues 160 to 180 (FLGFWNISHNLGGAGAAGVAL). Residues 181 to 189 (FGANYLFDG) lie on the Periplasmic side of the membrane. A helical transmembrane segment spans residues 190–210 (HVIGMFIFPSIIALIVGFIGL). Over 211–259 (RYGSDSPESYGLGKAEELFGEEISEEDKETESTDMTKWQIFVEYVLKNK) the chain is Cytoplasmic. Residues 260 to 280 (VIWLLCFANIFLYVVRIGIDQ) form a helical membrane-spanning segment. Residues 281-297 (WSTVYAFQELKLSKAVA) lie on the Periplasmic side of the membrane. Residues 298 to 318 (IQGFTLFEAGALVGTLLWGWL) form a helical membrane-spanning segment. The Cytoplasmic segment spans residues 319-326 (SDLANGRR). The chain crosses the membrane as a helical span at residues 327 to 347 (GLVACIALALIIATLGVYQHA). The Periplasmic segment spans residues 348–357 (SNEYIYLASL). A helical transmembrane segment spans residues 358-378 (FALGFLVFGPQLLIGVAAVGF). Topologically, residues 379–382 (VPKK) are cytoplasmic. Residues 383-403 (AIGAADGIKGTFAYLIGDSFA) form a helical membrane-spanning segment. Topologically, residues 404–425 (KLGLGMIADGTPVFGLTGWAGT) are periplasmic. A helical transmembrane segment spans residues 426–446 (FAALDIAAIGCICLMAIVAVM). At 447–463 (EERKIRREKKIQQLTVA) the chain is on the cytoplasmic side.

The protein belongs to the major facilitator superfamily. Organophosphate:Pi antiporter (OPA) (TC 2.A.1.4) family.

Its subcellular location is the cell inner membrane. Functionally, mediates the exchange of external hexose 6-phosphate and internal inorganic phosphate. The protein is Hexose-6-phosphate:phosphate antiporter (uhpT) of Escherichia coli O157:H7.